Here is a 192-residue protein sequence, read N- to C-terminus: Elongation factor P (192 aa).

It belongs to the elongation factor P family.

The protein localises to the cytoplasm. The protein operates within protein biosynthesis; polypeptide chain elongation. Its function is as follows. Involved in peptide bond synthesis. Stimulates efficient translation and peptide-bond synthesis on native or reconstituted 70S ribosomes in vitro. Probably functions indirectly by altering the affinity of the ribosome for aminoacyl-tRNA, thus increasing their reactivity as acceptors for peptidyl transferase. This chain is Elongation factor P (efp), found in Aquifex aeolicus (strain VF5).